A 42-amino-acid polypeptide reads, in one-letter code: Protein Tat (42 aa).

Positions 1–24 are interaction with human CREBBP; the sequence is MEPVDPNLEPWNHPGSQPKTACNQ. The tract at residues 22-37 is cysteine-rich; it reads CNQCYCKKCSYHCLVC. The residue at position 28 (lysine 28) is an N6-acetyllysine; by host PCAF.

Belongs to the lentiviruses Tat family. As to quaternary structure, interacts with host CCNT1. Associates with the P-TEFb complex composed at least of Tat, P-TEFb (CDK9 and CCNT1), TAR RNA, RNA Pol II. Recruits the HATs CREBBP, TAF1/TFIID, EP300, PCAF and GCN5L2. Interacts with host KAT5/Tip60; this interaction targets the latter to degradation. Interacts with the host deacetylase SIRT1. Interacts with host capping enzyme RNGTT; this interaction stimulates RNGTT. Binds to host KDR, and to the host integrins ITGAV/ITGB3 and ITGA5/ITGB1. Interacts with host KPNB1/importin beta-1 without previous binding to KPNA1/importin alpha-1. Interacts with EIF2AK2. Interacts with host nucleosome assembly protein NAP1L1; this interaction may be required for the transport of Tat within the nucleus, since the two proteins interact at the nuclear rim. Interacts with host C1QBP/SF2P32; this interaction involves lysine-acetylated Tat. Interacts with the host chemokine receptors CCR2, CCR3 and CXCR4. Interacts with host DPP4/CD26; this interaction may trigger an anti-proliferative effect. Interacts with host LDLR. Interacts with the host extracellular matrix metalloproteinase MMP1. Interacts with host PRMT6; this interaction mediates Tat's methylation. Interacts with, and is ubiquitinated by MDM2/Hdm2. Interacts with host PSMC3 and HTATIP2. Interacts with STAB1; this interaction may overcome SATB1-mediated repression of IL2 and IL2RA (interleukin) in T cells by binding to the same domain than HDAC1. Interacts (when acetylated) with human CDK13, thereby increasing HIV-1 mRNA splicing and promoting the production of the doubly spliced HIV-1 protein Nef. Interacts with host TBP; this interaction modulates the activity of transcriptional pre-initiation complex. Interacts with host RELA. Interacts with host PLSCR1; this interaction negatively regulates Tat transactivation activity by altering its subcellular distribution. In terms of processing, phosphorylated by EIF2AK2 on serine and threonine residues adjacent to the basic region important for TAR RNA binding and function. Phosphorylation of Tat by EIF2AK2 is dependent on the prior activation of EIF2AK2 by dsRNA. Post-translationally, asymmetrical arginine methylation by host PRMT6 seems to diminish the transactivation capacity of Tat and affects the interaction with host CCNT1. Polyubiquitination by host MDM2 does not target Tat to degradation, but activates its transactivation function and fosters interaction with CCNT1 and TAR RNA.

The protein resides in the host nucleus. It localises to the host nucleolus. Its subcellular location is the host cytoplasm. The protein localises to the secreted. Transcriptional activator that increases RNA Pol II processivity, thereby increasing the level of full-length viral transcripts. Recognizes a hairpin structure at the 5'-LTR of the nascent viral mRNAs referred to as the transactivation responsive RNA element (TAR) and recruits the cyclin T1-CDK9 complex (P-TEFb complex) that will in turn hyperphosphorylate the RNA polymerase II to allow efficient elongation. The CDK9 component of P-TEFb and other Tat-activated kinases hyperphosphorylate the C-terminus of RNA Pol II that becomes stabilized and much more processive. Other factors such as HTATSF1/Tat-SF1, SUPT5H/SPT5, and HTATIP2 are also important for Tat's function. Besides its effect on RNA Pol II processivity, Tat induces chromatin remodeling of proviral genes by recruiting the histone acetyltransferases (HATs) CREBBP, EP300 and PCAF to the chromatin. This also contributes to the increase in proviral transcription rate, especially when the provirus integrates in transcriptionally silent region of the host genome. To ensure maximal activation of the LTR, Tat mediates nuclear translocation of NF-kappa-B by interacting with host RELA. Through its interaction with host TBP, Tat may also modulate transcription initiation. Tat can reactivate a latently infected cell by penetrating in it and transactivating its LTR promoter. In the cytoplasm, Tat is thought to act as a translational activator of HIV-1 mRNAs. Its function is as follows. Extracellular circulating Tat can be endocytosed by surrounding uninfected cells via the binding to several surface receptors such as CD26, CXCR4, heparan sulfate proteoglycans (HSPG) or LDLR. Neurons are rarely infected, but they internalize Tat via their LDLR. Through its interaction with nuclear HATs, Tat is potentially able to control the acetylation-dependent cellular gene expression. Modulates the expression of many cellular genes involved in cell survival, proliferation or in coding for cytokines or cytokine receptors. Tat plays a role in T-cell and neurons apoptosis. Tat induced neurotoxicity and apoptosis probably contribute to neuroAIDS. Circulating Tat also acts as a chemokine-like and/or growth factor-like molecule that binds to specific receptors on the surface of the cells, affecting many cellular pathways. In the vascular system, Tat binds to ITGAV/ITGB3 and ITGA5/ITGB1 integrins dimers at the surface of endothelial cells and competes with bFGF for heparin-binding sites, leading to an excess of soluble bFGF. The polypeptide is Protein Tat (Human immunodeficiency virus type 1 group M subtype C (isolate ETH2220) (HIV-1)).